We begin with the raw amino-acid sequence, 1043 residues long: Constitutive coactivator of PPAR-gamma-like protein 1 homolog (1043 aa).

Disordered regions lie at residues 353–497 and 929–1043; these read SMVP…HMQI and YGRG…NKEE. Polar residues-rich tracts occupy residues 362–375 and 405–419; these read QMLN…QSRP and SPIN…NHVD. 2 stretches are compositionally biased toward basic and acidic residues: residues 451-471 and 951-964; these read TWDK…EQAK and EVAK…EDSK. The RNA binding stretch occupies residues 801-1043; it reads VELATKVEKM…LEGAVANKEE (243 aa). Residues 995–1010 show a composition bias toward low complexity; sequence EARASSNSESALSSDS.

Belongs to the constitutive coactivator of PPAR-gamma family.

Its subcellular location is the cytoplasm. It localises to the cell membrane. May bee involved in the oxidative stress-induced survival signaling. Binds RNA. May participate in mRNA transport in the cytoplasm. This Xenopus tropicalis (Western clawed frog) protein is Constitutive coactivator of PPAR-gamma-like protein 1 homolog (fam120a).